We begin with the raw amino-acid sequence, 370 residues long: UDP-N-acetylglucosamine--N-acetylmuramyl-(pentapeptide) pyrophosphoryl-undecaprenol N-acetylglucosamine transferase (370 aa).

UDP-N-acetyl-alpha-D-glucosamine is bound by residues 14 to 16 (TGG), Asn125, Arg168, Ser196, and Gln297.

It belongs to the glycosyltransferase 28 family. MurG subfamily.

It localises to the cell inner membrane. The enzyme catalyses di-trans,octa-cis-undecaprenyl diphospho-N-acetyl-alpha-D-muramoyl-L-alanyl-D-glutamyl-meso-2,6-diaminopimeloyl-D-alanyl-D-alanine + UDP-N-acetyl-alpha-D-glucosamine = di-trans,octa-cis-undecaprenyl diphospho-[N-acetyl-alpha-D-glucosaminyl-(1-&gt;4)]-N-acetyl-alpha-D-muramoyl-L-alanyl-D-glutamyl-meso-2,6-diaminopimeloyl-D-alanyl-D-alanine + UDP + H(+). Its pathway is cell wall biogenesis; peptidoglycan biosynthesis. Functionally, cell wall formation. Catalyzes the transfer of a GlcNAc subunit on undecaprenyl-pyrophosphoryl-MurNAc-pentapeptide (lipid intermediate I) to form undecaprenyl-pyrophosphoryl-MurNAc-(pentapeptide)GlcNAc (lipid intermediate II). This Nitrobacter hamburgensis (strain DSM 10229 / NCIMB 13809 / X14) protein is UDP-N-acetylglucosamine--N-acetylmuramyl-(pentapeptide) pyrophosphoryl-undecaprenol N-acetylglucosamine transferase.